The following is a 157-amino-acid chain: 1,4-dihydroxy-2-naphthoyl-CoA thioesterase 2 (157 aa).

Glu56 is a catalytic residue. The Microbody targeting signal signature appears at 154–156 (ISK).

The protein belongs to the 4-hydroxybenzoyl-CoA thioesterase family. DHNA-CoA hydrolase subfamily. In terms of assembly, homotetramers.

The protein resides in the peroxisome. It participates in cofactor biosynthesis; phylloquinone biosynthesis. The protein operates within quinol/quinone metabolism; 1,4-dihydroxy-2-naphthoate biosynthesis; 1,4-dihydroxy-2-naphthoate from chorismate: step 7/7. Its function is as follows. Catalyzes the hydrolysis of the thioester bond of 1,4-dihydroxy-2-naphthoyl-CoA (DHNA-CoA) in peroxisomes, a necessary step to form the naphthoquinone ring of phylloquinone (vitamin K(1)). Displayed also slight thioesterase activity towards benzoyl-CoA. Is not active on phenylacetyl-CoA, succinyl-CoA and palmitoyl-CoA thioesters. This chain is 1,4-dihydroxy-2-naphthoyl-CoA thioesterase 2, found in Arabidopsis thaliana (Mouse-ear cress).